A 238-amino-acid polypeptide reads, in one-letter code: UPF0328 protein ECU07_0010 (238 aa).

Disordered stretches follow at residues 1-154 and 211-238; these read MAAP…NTQR and GRLHGSPTKGAQTAQQAQPHPPKQLATL. Residues 106–128 show a composition bias toward basic and acidic residues; sequence HTEGCHTHEANPEPNTKHTETES. Residues 129 to 152 show a composition bias toward polar residues; it reads PKPQTSTQHHTPITIPSSLLSQNT.

It belongs to the UPF0328 family.

In Encephalitozoon cuniculi (strain GB-M1) (Microsporidian parasite), this protein is UPF0328 protein ECU07_0010.